Reading from the N-terminus, the 327-residue chain is Aspartate carbamoyltransferase catalytic subunit (327 aa).

2 residues coordinate carbamoyl phosphate: arginine 67 and threonine 68. Lysine 95 is a binding site for L-aspartate. Positions 117, 145, and 148 each coordinate carbamoyl phosphate. The L-aspartate site is built by arginine 178 and arginine 232. Residues glycine 273 and proline 274 each coordinate carbamoyl phosphate.

It belongs to the aspartate/ornithine carbamoyltransferase superfamily. ATCase family. As to quaternary structure, heterododecamer (2C3:3R2) of six catalytic PyrB chains organized as two trimers (C3), and six regulatory PyrI chains organized as three dimers (R2).

It catalyses the reaction carbamoyl phosphate + L-aspartate = N-carbamoyl-L-aspartate + phosphate + H(+). Its pathway is pyrimidine metabolism; UMP biosynthesis via de novo pathway; (S)-dihydroorotate from bicarbonate: step 2/3. In terms of biological role, catalyzes the condensation of carbamoyl phosphate and aspartate to form carbamoyl aspartate and inorganic phosphate, the committed step in the de novo pyrimidine nucleotide biosynthesis pathway. This chain is Aspartate carbamoyltransferase catalytic subunit, found in Parvibaculum lavamentivorans (strain DS-1 / DSM 13023 / NCIMB 13966).